The chain runs to 80 residues: UPF0346 protein LSEI_1394 (80 aa).

It belongs to the UPF0346 family.

The polypeptide is UPF0346 protein LSEI_1394 (Lacticaseibacillus paracasei (strain ATCC 334 / BCRC 17002 / CCUG 31169 / CIP 107868 / KCTC 3260 / NRRL B-441) (Lactobacillus paracasei)).